The sequence spans 231 residues: Uridylate kinase (231 aa).

6–9 provides a ligand contact to ATP; it reads KLSG. Positions 14 to 19 are involved in allosteric activation by GTP; the sequence is GEGGRG. ATP contacts are provided by glycine 49 and arginine 53. Residues aspartate 66 and 127–134 contribute to the UMP site; that span reads TSNPFFTT. Threonine 154, tyrosine 160, and aspartate 163 together coordinate ATP.

It belongs to the UMP kinase family. In terms of assembly, homohexamer.

Its subcellular location is the cytoplasm. The enzyme catalyses UMP + ATP = UDP + ADP. The protein operates within pyrimidine metabolism; CTP biosynthesis via de novo pathway; UDP from UMP (UMPK route): step 1/1. With respect to regulation, allosterically activated by GTP. Inhibited by UTP. Its function is as follows. Catalyzes the reversible phosphorylation of UMP to UDP. The sequence is that of Uridylate kinase from Thermotoga maritima (strain ATCC 43589 / DSM 3109 / JCM 10099 / NBRC 100826 / MSB8).